We begin with the raw amino-acid sequence, 177 residues long: Large ribosomal subunit protein uL6 (177 aa).

Residue Lys44 is modified to N6-acetyllysine.

The protein belongs to the universal ribosomal protein uL6 family. As to quaternary structure, part of the 50S ribosomal subunit.

Functionally, this protein binds to the 23S rRNA, and is important in its secondary structure. It is located near the subunit interface in the base of the L7/L12 stalk, and near the tRNA binding site of the peptidyltransferase center. The protein is Large ribosomal subunit protein uL6 of Escherichia coli O139:H28 (strain E24377A / ETEC).